A 475-amino-acid polypeptide reads, in one-letter code: tRNA-2-methylthio-N(6)-dimethylallyladenosine synthase (475 aa).

Over residues 1–10 (MQETTVKRDG) the composition is skewed to basic and acidic residues. The disordered stretch occupies residues 1-22 (MQETTVKRDGASPSDAGTPATT). The MTTase N-terminal domain maps to 27–144 (GKLYIRTFGC…LPDLIKRRRA (118 aa)). The [4Fe-4S] cluster site is built by Cys36, Cys73, Cys107, Cys181, Cys185, and Cys188. Residues 167 to 400 (RVDGATAFVS…QALINQQAAA (234 aa)) enclose the Radical SAM core domain. Positions 403–466 (QGMIGTRQRV…TNSLRGRVAG (64 aa)) constitute a TRAM domain.

It belongs to the methylthiotransferase family. MiaB subfamily. Monomer. [4Fe-4S] cluster serves as cofactor.

The protein localises to the cytoplasm. The enzyme catalyses N(6)-dimethylallyladenosine(37) in tRNA + (sulfur carrier)-SH + AH2 + 2 S-adenosyl-L-methionine = 2-methylsulfanyl-N(6)-dimethylallyladenosine(37) in tRNA + (sulfur carrier)-H + 5'-deoxyadenosine + L-methionine + A + S-adenosyl-L-homocysteine + 2 H(+). Catalyzes the methylthiolation of N6-(dimethylallyl)adenosine (i(6)A), leading to the formation of 2-methylthio-N6-(dimethylallyl)adenosine (ms(2)i(6)A) at position 37 in tRNAs that read codons beginning with uridine. The chain is tRNA-2-methylthio-N(6)-dimethylallyladenosine synthase from Bordetella parapertussis (strain 12822 / ATCC BAA-587 / NCTC 13253).